The following is a 331-amino-acid chain: Ornithine carbamoyltransferase (331 aa).

Residues 55 to 58, glutamine 82, arginine 106, and 133 to 136 contribute to the carbamoyl phosphate site; these read STRT and HPTQ. L-ornithine is bound by residues asparagine 166, aspartate 230, and 234–235; that span reads SM. Carbamoyl phosphate contacts are provided by residues 272–273 and arginine 317; that span reads CL.

The protein belongs to the aspartate/ornithine carbamoyltransferase superfamily. OTCase family.

The protein resides in the cytoplasm. The catalysed reaction is carbamoyl phosphate + L-ornithine = L-citrulline + phosphate + H(+). It functions in the pathway amino-acid biosynthesis; L-arginine biosynthesis; L-arginine from L-ornithine and carbamoyl phosphate: step 1/3. In terms of biological role, reversibly catalyzes the transfer of the carbamoyl group from carbamoyl phosphate (CP) to the N(epsilon) atom of ornithine (ORN) to produce L-citrulline. The chain is Ornithine carbamoyltransferase from Neisseria meningitidis serogroup C / serotype 2a (strain ATCC 700532 / DSM 15464 / FAM18).